The chain runs to 644 residues: Serine/threonine kinase YeaG (644 aa).

The protein belongs to the PrkA family. As to quaternary structure, monomer.

The protein localises to the cytoplasm. The catalysed reaction is L-seryl-[protein] + ATP = O-phospho-L-seryl-[protein] + ADP + H(+). It catalyses the reaction L-threonyl-[protein] + ATP = O-phospho-L-threonyl-[protein] + ADP + H(+). Kinase that plays a role in the adaptation to sustained nitrogen starvation. This Escherichia coli O157:H7 protein is Serine/threonine kinase YeaG (yeaG).